Consider the following 66-residue polypeptide: MSQEKLKSKLDQAKGGAKEGFGKITGDKELEAKGFIEKTIAKGKELADDAKDAVEGAVDAVKEKLK.

Positions 1-22 are disordered; that stretch reads MSQEKLKSKLDQAKGGAKEGFG.

It belongs to the UPF0337 (CsbD) family.

In Streptococcus agalactiae serotype V (strain ATCC BAA-611 / 2603 V/R), this protein is UPF0337 protein SAG0619.